The chain runs to 674 residues: Phosphopantothenoylcysteine decarboxylase subunit VHS3 (674 aa).

5 disordered regions span residues 1 to 164 (MTNK…SILS), 190 to 230 (LNSD…RPSV), 348 to 368 (QHNSIDTSFNSTNSNAGNITG), 384 to 426 (TSSN…SNVV), and 575 to 674 (VSAG…LQRS). The segment covering 15–81 (ASNTLSGAEQ…TSGAVVSNTP (67 aa)) has biased composition (polar residues). Phosphothreonine is present on threonine 90. Polar residues predominate over residues 106-116 (EQTPPNQVARQ). Residues 137–150 (NLKDINTKVPKDGE) are compositionally biased toward basic and acidic residues. Positions 152-164 (SASSFSTPTSILS) are enriched in polar residues. Positions 198–212 (SPRKEHPHFYVEDPL) are enriched in basic and acidic residues. Residues 214 to 230 (TPSVRSRSNSTSPRPSV) show a composition bias toward low complexity. Over residues 351–368 (SIDTSFNSTNSNAGNITG) the composition is skewed to polar residues. Residues 384–395 (TSSNSAASQTNN) show a composition bias toward low complexity. A compositionally biased stretch (polar residues) spans 403-426 (MASTTGFPSTLGGSRTYSNSSNVV). Residues 580-591 (EEEEDEDNDEED) are compositionally biased toward acidic residues. Residues 592 to 602 (DNKKNDTGGKD) show a composition bias toward basic and acidic residues. Residues 603–660 (EDNDDDDDDDDDDDDDDDDDDDDDDDDDDDDDDDDDDDDDDDDDDDDDEDDEDEDEDD) are compositionally biased toward acidic residues. Over residues 661–674 (EGKKKEDKGGLQRS) the composition is skewed to basic and acidic residues.

This sequence belongs to the HFCD (homooligomeric flavin containing Cys decarboxylase) superfamily. As to quaternary structure, interacts with the C-terminal domain of PPZ1. Component of the phosphopantothenoylcysteine decarboxylase (PPCDC) complex, a heterotrimer composed of CAB3, SIS2 and VHS3.

Its function is as follows. Component of the phosphopantothenoylcysteine decarboxylase (PPCDC) involved in the coenzyme A synthesis. Acts as an inhibitory subunit of protein phosphatase PPZ1, which is involved in many cellular processes such as G1-S transition or salt tolerance. In Saccharomyces cerevisiae (strain ATCC 204508 / S288c) (Baker's yeast), this protein is Phosphopantothenoylcysteine decarboxylase subunit VHS3 (VHS3).